Consider the following 984-residue polypeptide: DNA polymerase (984 aa).

The bipartite nuclear localization signal stretch occupies residues 804–827 (DNPGKKRKSTDDNEGPSPKRRVIT). The monopartite nuclear localization signal stretch occupies residues 939 to 948 (CSVKRKRDDD). Residues 943–969 (RKRDDDDDNDDDDDDDCDSSDSENDTQ) are disordered. Residues 947-966 (DDDDNDDDDDDDCDSSDSEN) are compositionally biased toward acidic residues.

It belongs to the DNA polymerase type-B family.

The protein localises to the host nucleus. The catalysed reaction is DNA(n) + a 2'-deoxyribonucleoside 5'-triphosphate = DNA(n+1) + diphosphate. Its function is as follows. Replicates the viral genome, host DNA polymerases cannot substitute for the viral enzyme in this process. The chain is DNA polymerase (POL) from Autographa californica nuclear polyhedrosis virus (AcMNPV).